The chain runs to 25 residues: Acyl carrier protein (25 aa).

Positions 2–25 constitute a Carrier domain; the sequence is ESIEQRVKKIVAEQLGVAEAEIKA.

This sequence belongs to the acyl carrier protein (ACP) family. Post-translationally, 4'-phosphopantetheine is transferred from CoA to a specific serine of apo-ACP by AcpS. This modification is essential for activity because fatty acids are bound in thioester linkage to the sulfhydryl of the prosthetic group.

The protein resides in the cytoplasm. It participates in lipid metabolism; fatty acid biosynthesis. In terms of biological role, carrier of the growing fatty acid chain in fatty acid biosynthesis. This chain is Acyl carrier protein (acpP), found in Alcaligenes faecalis.